We begin with the raw amino-acid sequence, 188 residues long: Proline-rich protein 3 (188 aa).

The segment at 1–157 (MPKRKKQNHH…DPQVMEDKSD (157 aa)) is disordered. Composition is skewed to pro residues over residues 35 to 46 (IGPPSLLGPPPM) and 69 to 82 (LIPP…PPWG). A compositionally biased stretch (low complexity) spans 83–96 (RGPIRRGLGPRSSP). Over residues 145-157 (PKDDPQVMEDKSD) the composition is skewed to basic and acidic residues. The segment at 155 to 183 (KSDRPVCRHFAKKGHCRYEDLCAFYHPGV) adopts a C3H1-type zinc-finger fold.

This is Proline-rich protein 3 (PRR3) from Homo sapiens (Human).